Here is a 102-residue protein sequence, read N- to C-terminus: Small ribosomal subunit protein uS10 (102 aa).

This sequence belongs to the universal ribosomal protein uS10 family. Part of the 30S ribosomal subunit.

Involved in the binding of tRNA to the ribosomes. The polypeptide is Small ribosomal subunit protein uS10 (Paracoccus denitrificans (strain Pd 1222)).